We begin with the raw amino-acid sequence, 330 residues long: Mas-related G-protein coupled receptor member B8 (330 aa).

The Extracellular segment spans residues 1-33; it reads MDSSFPDWNIEFREQNESYFMESSSCDMSLAMS. N-linked (GlcNAc...) asparagine glycosylation occurs at asparagine 16. Residues 34 to 54 traverse the membrane as a helical segment; it reads LLSIIIAIIGLTGNVIVLQLL. The Cytoplasmic segment spans residues 55 to 62; sequence GFHMHRNA. The helical transmembrane segment at 63–83 threads the bilayer; it reads FSVYIFNLSGANFLFLCTHIV. Residues 84–101 are Extracellular-facing; sequence FSLENLIRQFHYIDIHMA. A helical transmembrane segment spans residues 102–122; it reads LFSVNVTILAYLAGVSMITAI. At 123-146 the chain is on the cytoplasmic side; sequence SVEYWLSVLWPTWYHAQRPKHTST. A helical membrane pass occupies residues 147-167; that stretch reads VICTLLWVFSLLLTLWNWIIC. Over 168–177 the chain is Extracellular; that stretch reads KVLDYIYNWD. Residues 178 to 198 form a helical membrane-spanning segment; the sequence is MCWKLALIIVVWLLVLFVVLS. At 199–219 the chain is on the cytoplasmic side; it reads RSNQALLFRVFCGSQQTPVTR. Residues 220 to 240 traverse the membrane as a helical segment; the sequence is LLVTIMLTALVVLICGFGIGI. The Extracellular portion of the chain corresponds to 241 to 260; it reads CFFYWKKEENSIMPCGYFYE. The helical transmembrane segment at 261 to 281 threads the bilayer; sequence TILLLSGVNSCANPIICLFVG. The Cytoplasmic segment spans residues 282–330; the sequence is SIKHCQFQCGTLRLILQRAIQESPEEEDEEVEEVVEQEGGEEDEESTTL. The tract at residues 302–330 is disordered; sequence QESPEEEDEEVEEVVEQEGGEEDEESTTL. The segment covering 304 to 330 has biased composition (acidic residues); that stretch reads SPEEEDEEVEEVVEQEGGEEDEESTTL.

The protein belongs to the G-protein coupled receptor 1 family. Mas subfamily.

It is found in the membrane. Its function is as follows. Orphan receptor. Probably involved in the function of nociceptive neurons. May regulate nociceptor function and/or development, including the sensation or modulation of pain. This is Mas-related G-protein coupled receptor member B8 (Mrgprb8) from Mus musculus (Mouse).